The following is a 553-amino-acid chain: Putative transport protein PM1071 (553 aa).

Transmembrane regions (helical) follow at residues 4–24, 28–48, 65–85, 91–111, and 157–177; these read IAIT…IGHW, GVGL…HFTN, FGLI…FFAS, LKLN…VIVI, and MAYA…MWLI. RCK C-terminal domains lie at 190-276 and 277-361; these read KNFL…VLGE and EVDV…ILGN. The next 6 membrane-spanning stretches (helical) occupy residues 371–391, 403–425, 439–459, 464–484, 496–516, and 533–553; these read MLPV…PFHI, AGGP…LYWF, IVLF…DTLV, LEWM…VGIV, LCGL…ANAI, and LVMF…WTLL.

This sequence belongs to the AAE transporter (TC 2.A.81) family. YidE subfamily.

The protein resides in the cell membrane. In Pasteurella multocida (strain Pm70), this protein is Putative transport protein PM1071.